The chain runs to 360 residues: SUN domain-containing protein 3 (360 aa).

The span at Met-1–Ser-10 shows a compositional bias: polar residues. The segment at Met-1 to Ala-39 is disordered. Residues Met-1–Lys-47 lie on the Nuclear side of the membrane. Residues Ala-48–Met-67 form a helical membrane-spanning segment. At Lys-68–Ser-360 the chain is on the perinuclear space side. A coiled-coil region spans residues Lys-103–Asp-142. The SUN domain occupies Gly-196–Lys-357.

As to quaternary structure, self-associates. Interacts with SYNE1 and SPAG4/SUN4. Proposed to form a spermatogenesis-specific LINC complex with SYNE1 during sperm head formation possibly implicating a SUN domain-based heterotrimer with SPAG4/SUN4 associating with SYNE1.

Its subcellular location is the membrane. It is found in the nucleus envelope. The protein localises to the nucleus inner membrane. Functionally, as a probable component of the LINC (LInker of Nucleoskeleton and Cytoskeleton) complex, involved in the connection between the nuclear lamina and the cytoskeleton. The nucleocytoplasmic interactions established by the LINC complex play an important role in the transmission of mechanical forces across the nuclear envelope and in nuclear movement and positioning. May be involved in nuclear remodeling during sperm head formation in spermatogenesis. A probable SUN3:SYNE1 LINC complex may tether spermatid nuclei to posterior cytoskeletal structures such as the manchette. The polypeptide is SUN domain-containing protein 3 (SUN3) (Bos taurus (Bovine)).